We begin with the raw amino-acid sequence, 236 residues long: Orotidine 5'-phosphate decarboxylase (236 aa).

Residues Asp17, Lys39, 66–75 (DLKFYDIPNT), Thr125, Arg187, Gln196, Gly216, and Arg217 contribute to the substrate site. The active-site Proton donor is the Lys68.

It belongs to the OMP decarboxylase family. Type 1 subfamily. As to quaternary structure, homodimer.

The catalysed reaction is orotidine 5'-phosphate + H(+) = UMP + CO2. It participates in pyrimidine metabolism; UMP biosynthesis via de novo pathway; UMP from orotate: step 2/2. In terms of biological role, catalyzes the decarboxylation of orotidine 5'-monophosphate (OMP) to uridine 5'-monophosphate (UMP). The polypeptide is Orotidine 5'-phosphate decarboxylase (Buchnera aphidicola subsp. Baizongia pistaciae (strain Bp)).